The primary structure comprises 238 residues: CFA/I fimbrial subunit A (238 aa).

The signal sequence occupies residues 1-19 (MHKLFYLLSLLMAPFVANA).

It is found in the fimbrium. Might function as a shuttle protein in the transport of fimbria through the periplasmic space or might function as an adhesin. The polypeptide is CFA/I fimbrial subunit A (cfaA) (Escherichia coli).